Reading from the N-terminus, the 355-residue chain is Methylthioribose-1-phosphate isomerase (355 aa).

Substrate-binding positions include 50 to 52 (RGA), Arg93, and Gln198. Asp239 functions as the Proton donor in the catalytic mechanism. A substrate-binding site is contributed by 249-250 (NK).

The protein belongs to the eIF-2B alpha/beta/delta subunits family. MtnA subfamily. In terms of assembly, homodimer.

It carries out the reaction 5-(methylsulfanyl)-alpha-D-ribose 1-phosphate = 5-(methylsulfanyl)-D-ribulose 1-phosphate. It functions in the pathway amino-acid biosynthesis; L-methionine biosynthesis via salvage pathway; L-methionine from S-methyl-5-thio-alpha-D-ribose 1-phosphate: step 1/6. In terms of biological role, catalyzes the interconversion of methylthioribose-1-phosphate (MTR-1-P) into methylthioribulose-1-phosphate (MTRu-1-P). The polypeptide is Methylthioribose-1-phosphate isomerase (Geobacillus thermodenitrificans (strain NG80-2)).